We begin with the raw amino-acid sequence, 68 residues long: Small integral membrane protein 10-like protein 1 (68 aa).

The disordered stretch occupies residues 1–21 (MAPAAAPSSLAVRASSPAATP).

The polypeptide is Small integral membrane protein 10-like protein 1 (Homo sapiens (Human)).